The following is a 455-amino-acid chain: Probable glycine dehydrogenase (decarboxylating) subunit 1 (455 aa).

The protein belongs to the GcvP family. N-terminal subunit subfamily. As to quaternary structure, the glycine cleavage system is composed of four proteins: P, T, L and H. In this organism, the P 'protein' is a heterodimer of two subunits.

The catalysed reaction is N(6)-[(R)-lipoyl]-L-lysyl-[glycine-cleavage complex H protein] + glycine + H(+) = N(6)-[(R)-S(8)-aminomethyldihydrolipoyl]-L-lysyl-[glycine-cleavage complex H protein] + CO2. The glycine cleavage system catalyzes the degradation of glycine. The P protein binds the alpha-amino group of glycine through its pyridoxal phosphate cofactor; CO(2) is released and the remaining methylamine moiety is then transferred to the lipoamide cofactor of the H protein. This Francisella tularensis subsp. novicida (strain U112) protein is Probable glycine dehydrogenase (decarboxylating) subunit 1.